The primary structure comprises 463 residues: MSDGTQKLWGGRFTGETDPLMHLYNASLPYDYKMYKADLEGTKVYTAGLQKLGLLTDAELAKIHEGLAEIQKEWDADKFVRHPNDEDIHTANERRLGEIIGREIAGKVHTGRSRNDQVVTDLRIYCRDVVNDTLFPALKGLVDVLIKRAEGEIDILMPGYTHLQRAQPIRWSHWLSSYATYFTEDYKRLGQILHRLNQSPLGAGALAGHPYGIDREFLAEGLGFNSVIGNSLVAVSDRDFIVELMFWGTLFMNHISRFAEDLIIYCTAEFGFIQLSDAYSTGSSLMPQKKNADSLELLRGKSGRVFGDLTGFLMSLKGIPSTYDKDMQEDKEPLFDCLTTVEHSMLIATGVISTLTVNKDKMEAALTMDMLATDLADYLVRKGVPFRETHHISGECVATAENLGLSGIDKLTLEQYQKIDSRFAEDLFETFNFEQSVERRNATGGTAKSAVLKQLNNLKSQLN.

3 residues coordinate 2-(N(omega)-L-arginino)succinate: Ser-27, Asn-115, and Thr-161. His-162 acts as the Proton acceptor in catalysis. The active-site Proton donor is Ser-283. 2-(N(omega)-L-arginino)succinate is bound by residues Asn-291, Tyr-323, Gln-328, and Lys-331.

It belongs to the lyase 1 family. Argininosuccinate lyase subfamily. As to quaternary structure, homotetramer.

It catalyses the reaction 2-(N(omega)-L-arginino)succinate = fumarate + L-arginine. It functions in the pathway amino-acid biosynthesis; L-arginine biosynthesis; L-arginine from L-ornithine and carbamoyl phosphate: step 3/3. The protein is Argininosuccinate lyase (ARG4) of Saccharomyces paradoxus (Yeast).